The following is a 484-amino-acid chain: Glutamate mutase epsilon subunit (484 aa).

An L-glutamate-binding site is contributed by R66. G68 contacts adenosylcob(III)alamin. R100 contributes to the L-glutamate binding site. N123 serves as a coordination point for adenosylcob(III)alamin. L-glutamate-binding positions include R149–H150, E171, and Y177. P180 lines the adenosylcob(III)alamin pocket. An L-glutamate-binding site is contributed by Y181. Residues F297, K326, E330, and I334 each coordinate adenosylcob(III)alamin.

Belongs to the methylaspartate mutase GlmE subunit family. Heterotetramer composed of 2 epsilon subunits (GlmE) and 2 sigma subunits (GlmS). GlmE exists as a homodimer and GlmS as a monomer. Adenosylcob(III)alamin is required as a cofactor.

It carries out the reaction (2S,3S)-3-methyl-L-aspartate = L-glutamate. Its pathway is amino-acid degradation; L-glutamate degradation via mesaconate pathway; acetate and pyruvate from L-glutamate: step 1/4. Catalyzes the carbon skeleton rearrangement of L-glutamate to L-threo-3-methylaspartate ((2S,3S)-3-methylaspartate). This Desulfitobacterium hafniense (strain Y51) protein is Glutamate mutase epsilon subunit.